The chain runs to 288 residues: Diaminopimelate epimerase (288 aa).

The substrate site is built by asparagine 13, glutamine 46, and asparagine 66. Residue cysteine 75 is the Proton donor of the active site. Residues 76 to 77 (GN), asparagine 166, asparagine 199, and 217 to 218 (ER) each bind substrate. Cysteine 226 serves as the catalytic Proton acceptor. 227–228 (GT) serves as a coordination point for substrate.

This sequence belongs to the diaminopimelate epimerase family. As to quaternary structure, homodimer.

The protein resides in the cytoplasm. The enzyme catalyses (2S,6S)-2,6-diaminopimelate = meso-2,6-diaminopimelate. The protein operates within amino-acid biosynthesis; L-lysine biosynthesis via DAP pathway; DL-2,6-diaminopimelate from LL-2,6-diaminopimelate: step 1/1. Functionally, catalyzes the stereoinversion of LL-2,6-diaminopimelate (L,L-DAP) to meso-diaminopimelate (meso-DAP), a precursor of L-lysine and an essential component of the bacterial peptidoglycan. The sequence is that of Diaminopimelate epimerase from Cupriavidus necator (strain ATCC 17699 / DSM 428 / KCTC 22496 / NCIMB 10442 / H16 / Stanier 337) (Ralstonia eutropha).